A 306-amino-acid chain; its full sequence is Homoserine O-acetyltransferase (306 aa).

The Acyl-thioester intermediate role is filled by cysteine 142. Substrate is bound by residues lysine 163 and serine 192. Histidine 235 (proton acceptor) is an active-site residue. Residue glutamate 237 is part of the active site. Arginine 249 lines the substrate pocket.

It belongs to the MetA family.

Its subcellular location is the cytoplasm. It catalyses the reaction L-homoserine + acetyl-CoA = O-acetyl-L-homoserine + CoA. Its pathway is amino-acid biosynthesis; L-methionine biosynthesis via de novo pathway; O-acetyl-L-homoserine from L-homoserine: step 1/1. Its function is as follows. Transfers an acetyl group from acetyl-CoA to L-homoserine, forming acetyl-L-homoserine. This is Homoserine O-acetyltransferase from Clostridium botulinum (strain Eklund 17B / Type B).